Consider the following 216-residue polypeptide: MTNITSVNTLVSASKLTCIREERILFDELSFDINAGDIVQIEGPNGAGKTSLLRILAGLSRPYAGQTFYLNEDINRCRDEYNEDLLYLGHLAGVKSELTAEENLNFNLRISGYDDFDTAAILAKVNLAGFEEALAGHLSAGQHRRTALARLWHNDCKVWILDEPFTAIDKKGVEELEQLFIQHADNGGCVILTTHQDMGIIKDDRLRKIRLDYRFV.

Residues 11 to 216 (VSASKLTCIR…RKIRLDYRFV (206 aa)) enclose the ABC transporter domain. 43-50 (GPNGAGKT) contacts ATP.

The protein belongs to the ABC transporter superfamily. CcmA exporter (TC 3.A.1.107) family. The complex is composed of two ATP-binding proteins (CcmA) and two transmembrane proteins (CcmB).

It is found in the cell inner membrane. It catalyses the reaction heme b(in) + ATP + H2O = heme b(out) + ADP + phosphate + H(+). Part of the ABC transporter complex CcmAB involved in the biogenesis of c-type cytochromes; once thought to export heme, this seems not to be the case, but its exact role is uncertain. Responsible for energy coupling to the transport system. The polypeptide is Cytochrome c biogenesis ATP-binding export protein CcmA (Shewanella sp. (strain MR-7)).